A 137-amino-acid chain; its full sequence is Small ribosomal subunit protein uS11A (137 aa).

Serine 2 is modified (N-acetylserine). The segment at 117–137 is disordered; that stretch reads DVTPVPSDSTRKKGGRRGRRL. Over residues 128-137 the composition is skewed to basic residues; that stretch reads KKGGRRGRRL.

Belongs to the universal ribosomal protein uS11 family. Component of the small ribosomal subunit (SSU). Mature yeast ribosomes consist of a small (40S) and a large (60S) subunit. The 40S small subunit contains 1 molecule of ribosomal RNA (18S rRNA) and 33 different proteins (encoded by 57 genes). The large 60S subunit contains 3 rRNA molecules (25S, 5.8S and 5S rRNA) and 46 different proteins (encoded by 81 genes). uS11 interacts with eS1 forming part of the mRNA exit tunnel. uS11 interacts with snoRNA U3. uS11 interacts with MPP10. Component of the ribosomal small subunit (SSU) processome composed of at least 40 protein subunits and snoRNA U3. Post-translationally, N-terminally acetylated by acetyltransferase NatA.

Its subcellular location is the cytoplasm. It is found in the nucleus. The protein localises to the nucleolus. Functionally, component of the ribosome, a large ribonucleoprotein complex responsible for the synthesis of proteins in the cell. The small ribosomal subunit (SSU) binds messenger RNAs (mRNAs) and translates the encoded message by selecting cognate aminoacyl-transfer RNA (tRNA) molecules. The large subunit (LSU) contains the ribosomal catalytic site termed the peptidyl transferase center (PTC), which catalyzes the formation of peptide bonds, thereby polymerizing the amino acids delivered by tRNAs into a polypeptide chain. The nascent polypeptides leave the ribosome through a tunnel in the LSU and interact with protein factors that function in enzymatic processing, targeting, and the membrane insertion of nascent chains at the exit of the ribosomal tunnel. uS11 is involved in nucleolar processing of pre-18S ribosomal RNA and ribosome assembly. In Saccharomyces cerevisiae (strain ATCC 204508 / S288c) (Baker's yeast), this protein is Small ribosomal subunit protein uS11A.